The following is a 462-amino-acid chain: DIMBOA UDP-glucosyltransferase BX9 (462 aa).

Residue His-24 is the Proton acceptor of the active site. An an anthocyanidin-binding site is contributed by His-24. Catalysis depends on Asp-115, which acts as the Charge relay. Residues Thr-137, Ala-336, Gln-338, His-353, Trp-356, Asn-357, Ser-358, and Glu-361 each contribute to the UDP-alpha-D-glucose site. Position 376 (Gly-376) interacts with an anthocyanidin. UDP-alpha-D-glucose contacts are provided by Asp-377 and Gln-378.

Belongs to the UDP-glycosyltransferase family. It depends on Mg(2+) as a cofactor. Ca(2+) serves as cofactor. As to expression, expressed at the same levels in roots and shoots.

The catalysed reaction is DIMBOA + UDP-alpha-D-glucose = DIMBOA beta-D-glucoside + UDP + H(+). It carries out the reaction DIBOA + UDP-alpha-D-glucose = DIBOA beta-D-glucoside + UDP + H(+). Its function is as follows. Glucosyltransferase involved in the last step of benzoxazinoid glucoside biosynthesis. Catalyzes the glucosylation of hydroxamic acids utilizing UDP-glucose as glucose doner, reducing the toxicity of these natural insecticides for storage. Can use DIMBOA and DIBOA as substrates, HMBOA (2-hydroxy-7-methoxy-2H-1,4-benzoxazin-3(4H)-one) and HBOA (2-hydroxy-2H-1,4-benzoxazin-3(4H)-one) with a lower efficiency, but not indole acetic acid or quercitin. This is DIMBOA UDP-glucosyltransferase BX9 (BX9) from Zea mays (Maize).